We begin with the raw amino-acid sequence, 220 residues long: MELNKYIDHTLLKPEAKSKDIDKLIDEAKKYNFKAICINSSWVKYAKEKLKDSDIKIASVIDFPFGAAITQAKVQEAKLAISHGASEIDMVMNIGKFKDGDYEYVLNDIKSVKKVMGSNILKVIIETALLNEKEIIKACQIVLNSGAEFVKTSTGYSYRGASESDIEIMKKTVGDKVLIKASGGIKNQESLKKMIELGSSRIGTSSSVALMENQEIKKGY.

D89 serves as the catalytic Proton donor/acceptor. The active-site Schiff-base intermediate with acetaldehyde is K151. Residue K180 is the Proton donor/acceptor of the active site.

It belongs to the DeoC/FbaB aldolase family. DeoC type 1 subfamily.

The protein localises to the cytoplasm. The catalysed reaction is 2-deoxy-D-ribose 5-phosphate = D-glyceraldehyde 3-phosphate + acetaldehyde. It functions in the pathway carbohydrate degradation; 2-deoxy-D-ribose 1-phosphate degradation; D-glyceraldehyde 3-phosphate and acetaldehyde from 2-deoxy-alpha-D-ribose 1-phosphate: step 2/2. Catalyzes a reversible aldol reaction between acetaldehyde and D-glyceraldehyde 3-phosphate to generate 2-deoxy-D-ribose 5-phosphate. The chain is Deoxyribose-phosphate aldolase from Mycoplasmopsis pulmonis (strain UAB CTIP) (Mycoplasma pulmonis).